Here is a 402-residue protein sequence, read N- to C-terminus: Propionate kinase (402 aa).

Residues Asn-11 and Lys-18 each contribute to the ATP site. A Mg(2+)-binding site is contributed by Asn-11. Residue Arg-86 coordinates substrate. Catalysis depends on Asp-143, which acts as the Proton donor/acceptor. ATP is bound by residues His-175, 203-207 (HLGNG), 278-280 (DLR), and 326-330 (GIGEN).

It belongs to the acetokinase family. TdcD subfamily. Homodimer. Requires Mg(2+) as cofactor.

The catalysed reaction is propanoate + ATP = propanoyl phosphate + ADP. It participates in amino-acid degradation; L-threonine degradation via propanoate pathway; propanoate from L-threonine: step 4/4. In terms of biological role, catalyzes the conversion of propionyl phosphate and ADP to propionate and ATP. The chain is Propionate kinase from Escherichia coli O6:H1 (strain CFT073 / ATCC 700928 / UPEC).